The sequence spans 202 residues: Superoxide dismutase [Cu-Zn], chloroplastic (202 aa).

The N-terminal 48 residues, 1 to 48 (MASQTLVSPSPLSSHSLLRTSFSGVSVKLAPQFSTLATSNFKPLTVVA), are a transit peptide targeting the chloroplast. Cu cation-binding residues include histidine 94, histidine 96, and histidine 111. Cysteines 105 and 194 form a disulfide. Histidine 111, histidine 119, histidine 128, and aspartate 131 together coordinate Zn(2+). Histidine 168 is a Cu cation binding site.

This sequence belongs to the Cu-Zn superoxide dismutase family. Homotetramer. Cu cation is required as a cofactor. It depends on Zn(2+) as a cofactor.

The protein resides in the plastid. Its subcellular location is the chloroplast. It carries out the reaction 2 superoxide + 2 H(+) = H2O2 + O2. Destroys radicals which are normally produced within the cells and which are toxic to biological systems. The chain is Superoxide dismutase [Cu-Zn], chloroplastic (SODCP) from Pisum sativum (Garden pea).